The sequence spans 197 residues: Elongation factor Ts (197 aa).

Residues 81–84 (TDFV) form an involved in Mg(2+) ion dislocation from EF-Tu region.

This sequence belongs to the EF-Ts family.

Its subcellular location is the cytoplasm. Its function is as follows. Associates with the EF-Tu.GDP complex and induces the exchange of GDP to GTP. It remains bound to the aminoacyl-tRNA.EF-Tu.GTP complex up to the GTP hydrolysis stage on the ribosome. The chain is Elongation factor Ts from Coprothermobacter proteolyticus (strain ATCC 35245 / DSM 5265 / OCM 4 / BT).